Consider the following 1040-residue polypeptide: Multidrug resistance protein MdtB (1040 aa).

Helical transmembrane passes span 25–45, 347–367, 369–389, 396–416, 440–460, 472–492, 537–557, 863–883, 888–908, 910–930, 968–988, and 998–1018; these read LLMA…PVAA, LMLA…NIPA, IIPG…MVFL, LTLM…IVVI, IGFT…PLLF, FAVT…TLTP, WLTL…WIVI, LGST…VLGV, FIHP…ALLA, IIAG…LIGI, ILMT…STGV, and IAMV…TPVI.

Belongs to the resistance-nodulation-cell division (RND) (TC 2.A.6) family. MdtB subfamily. Part of a tripartite efflux system composed of MdtA, MdtB and MdtC. MdtB forms a heteromultimer with MdtC.

It localises to the cell inner membrane. The sequence is that of Multidrug resistance protein MdtB from Salmonella agona (strain SL483).